We begin with the raw amino-acid sequence, 86 residues long: Cytochrome c-555 (86 aa).

Cys14, Cys17, His18, and Met60 together coordinate heme c.

In terms of processing, binds 1 heme c group covalently per subunit.

Its function is as follows. This basic c-type monoheme cytochrome has been found exclusively in the green photosynthetic bacteria, although its role in bacterial photosynthesis is not established. It has an unusually low redox potential compared with mitochondrial cytochrome c. It is reactive with cytochrome c oxidases but not with reductases. The sequence is that of Cytochrome c-555 from Chlorobaculum thiosulfatiphilum (Chlorobium limicola f.sp. thiosulfatophilum).